We begin with the raw amino-acid sequence, 186 residues long: Protein Syd (186 aa).

It belongs to the Syd family.

Its subcellular location is the cell inner membrane. In terms of biological role, interacts with the SecY protein in vivo. May bind preferentially to an uncomplexed state of SecY, thus functioning either as a chelating agent for excess SecY in the cell or as a regulatory factor that negatively controls the translocase function. In Erwinia tasmaniensis (strain DSM 17950 / CFBP 7177 / CIP 109463 / NCPPB 4357 / Et1/99), this protein is Protein Syd.